The sequence spans 190 residues: MAEKTQKSVKIAPGAVVCVESEIRGDVTIGPRTVIHPKARIIAEAGPIVIGEGNLIEEQALIINAHPDNITPDAEDSEPKPMIIGTNNVFEVGCYSQAMKMGDNNVIESKAYVGRNVILTSGCIIGACCNLNTFEVIPENTVIYGADCLRRVQTERPQPQTLQLDFLMKILPNYHHLKKTMKGSSTPVKN.

Thr-186 carries the post-translational modification Phosphothreonine.

It belongs to the dynactin subunits 5/6 family. Dynactin subunit 6 subfamily. Subunit of dynactin, a multiprotein complex part of a tripartite complex with dynein and a adapter, such as BICDL1, BICD2 or HOOK3. The dynactin complex is built around ACTR1A/ACTB filament and consists of an actin-related filament composed of a shoulder domain, a pointed end and a barbed end. Its length is defined by its flexible shoulder domain. The soulder is composed of 2 DCTN1 subunits, 4 DCTN2 and 2 DCTN3. The 4 DCNT2 (via N-terminus) bind the ACTR1A filament and act as molecular rulers to determine the length. The pointed end is important for binding dynein-dynactin cargo adapters. Consists of 4 subunits: ACTR10, DCNT4, DCTN5 and DCTN6. Within the complex DCTN6 forms a heterodimer with DCTN5. The barbed end is composed of a CAPZA1:CAPZB heterodimers, which binds ACTR1A/ACTB filament and dynactin and stabilizes dynactin. Interacts with PLK1. Interacts with N4BP2L1. Phosphorylation at Thr-186 by CDK1 during mitotic prometaphase creates a binding site for PLK1 that facilitates its recruitment to kinetochores.

The protein resides in the cytoplasm. Its subcellular location is the cytoskeleton. The protein localises to the chromosome. It is found in the centromere. It localises to the kinetochore. Its function is as follows. Part of the dynactin complex that activates the molecular motor dynein for ultra-processive transport along microtubules. The protein is Dynactin subunit 6 (DCTN6) of Sus scrofa (Pig).